The primary structure comprises 224 residues: Orotate phosphoribosyltransferase (224 aa).

5-phospho-alpha-D-ribose 1-diphosphate contacts are provided by residues K26, Y73–K74, R100, K101, K104, H106, and E127–S135. Orotate is bound by residues T131 and R160.

The protein belongs to the purine/pyrimidine phosphoribosyltransferase family. PyrE subfamily. Homodimer. Mg(2+) serves as cofactor.

The enzyme catalyses orotidine 5'-phosphate + diphosphate = orotate + 5-phospho-alpha-D-ribose 1-diphosphate. It functions in the pathway pyrimidine metabolism; UMP biosynthesis via de novo pathway; UMP from orotate: step 1/2. Its function is as follows. Catalyzes the transfer of a ribosyl phosphate group from 5-phosphoribose 1-diphosphate to orotate, leading to the formation of orotidine monophosphate (OMP). This Clostridium beijerinckii (strain ATCC 51743 / NCIMB 8052) (Clostridium acetobutylicum) protein is Orotate phosphoribosyltransferase.